A 152-amino-acid chain; its full sequence is D-aminoacyl-tRNA deacylase (152 aa).

The Gly-cisPro motif, important for rejection of L-amino acids motif lies at 137 to 138 (GP).

Belongs to the DTD family. Homodimer.

It is found in the cytoplasm. The enzyme catalyses glycyl-tRNA(Ala) + H2O = tRNA(Ala) + glycine + H(+). It catalyses the reaction a D-aminoacyl-tRNA + H2O = a tRNA + a D-alpha-amino acid + H(+). An aminoacyl-tRNA editing enzyme that deacylates mischarged D-aminoacyl-tRNAs. Also deacylates mischarged glycyl-tRNA(Ala), protecting cells against glycine mischarging by AlaRS. Acts via tRNA-based rather than protein-based catalysis; rejects L-amino acids rather than detecting D-amino acids in the active site. By recycling D-aminoacyl-tRNA to D-amino acids and free tRNA molecules, this enzyme counteracts the toxicity associated with the formation of D-aminoacyl-tRNA entities in vivo and helps enforce protein L-homochirality. In Methylibium petroleiphilum (strain ATCC BAA-1232 / LMG 22953 / PM1), this protein is D-aminoacyl-tRNA deacylase.